The sequence spans 589 residues: Aspartate--tRNA ligase (589 aa).

E174 contributes to the L-aspartate binding site. The segment at 198 to 201 is aspartate; that stretch reads QLFK. L-aspartate is bound at residue R220. ATP contacts are provided by residues 220–222 and Q229; that span reads RDE. An L-aspartate-binding site is contributed by H448. Residue E483 coordinates ATP. Residue R490 participates in L-aspartate binding. 535–538 is an ATP binding site; the sequence is GIDR.

This sequence belongs to the class-II aminoacyl-tRNA synthetase family. Type 1 subfamily. As to quaternary structure, homodimer.

The protein localises to the cytoplasm. It carries out the reaction tRNA(Asp) + L-aspartate + ATP = L-aspartyl-tRNA(Asp) + AMP + diphosphate. Catalyzes the attachment of L-aspartate to tRNA(Asp) in a two-step reaction: L-aspartate is first activated by ATP to form Asp-AMP and then transferred to the acceptor end of tRNA(Asp). This Xylella fastidiosa (strain 9a5c) protein is Aspartate--tRNA ligase.